We begin with the raw amino-acid sequence, 132 residues long: D-ribose pyranase (132 aa).

Histidine 20 serves as the catalytic Proton donor. Substrate-binding positions include aspartate 28, histidine 99, and 121–123 (YAN).

The protein belongs to the RbsD / FucU family. RbsD subfamily. In terms of assembly, homodecamer.

The protein resides in the cytoplasm. The catalysed reaction is beta-D-ribopyranose = beta-D-ribofuranose. It participates in carbohydrate metabolism; D-ribose degradation; D-ribose 5-phosphate from beta-D-ribopyranose: step 1/2. Catalyzes the interconversion of beta-pyran and beta-furan forms of D-ribose. This chain is D-ribose pyranase, found in Variovorax paradoxus (strain S110).